The following is a 156-amino-acid chain: MKGKPAVLAQLHKLLRGELAARDQYFIHSRMYQDWGLEKLYSRIDHEMQDETAHASLLIERILFLEETPDLSQQDPIRVGKTVPEMLQYDLDYEYEVIANLKEAMAVCEQEQDYQSRDLLLKILADTEEDHAYWLEKQLGLIEKIGLQNYLQSQMS.

In terms of domain architecture, Ferritin-like diiron spans 1 to 146 (MKGKPAVLAQ…KQLGLIEKIG (146 aa)). Fe cation contacts are provided by E18, E51, H54, E94, E128, and H131.

Belongs to the bacterioferritin family. The bacterioferritin (BFR) complex is formed of 24 subunits (BfrA and BfrB) of unknown stoichiometry. The BFR is arranged as 12 dimers that are packed together to form an approximately spherical molecule with a central cavity, in which large amounts of iron can be deposited.

It localises to the cytoplasm. The catalysed reaction is 4 Fe(2+) + O2 + 4 H(+) = 4 Fe(3+) + 2 H2O. It catalyses the reaction Fe(2+)(in) = Fe(2+)(out). In terms of biological role, part of the iron-storage bacterioferritin (BFR) complex which stores about 50% of intracellular iron. Iron-storage protein, whose ferroxidase center binds Fe(2+), oxidizes it using dioxygen to Fe(3+), and participates in the subsequent Fe(3+) oxide mineral core formation within the central cavity of the BFR protein shell. BFR rapidly binds iron in labeling experiments in vivo during iron-limiting conditions. This chain is Bacterial ferritin, found in Synechocystis sp. (strain ATCC 27184 / PCC 6803 / Kazusa).